The sequence spans 362 residues: Glutaminase-asparaginase (362 aa).

An N-terminal signal peptide occupies residues methionine 1–alanine 25. Positions serine 35 to tyrosine 362 constitute an Asparaginase/glutaminase domain. Threonine 45 serves as the catalytic Acyl-ester intermediate. Substrate contacts are provided by residues serine 92 and threonine 125–aspartate 126.

This sequence belongs to the asparaginase 1 family. As to quaternary structure, homotetramer.

It localises to the periplasm. The enzyme catalyses L-glutamine + H2O = L-glutamate + NH4(+). It catalyses the reaction L-asparagine + H2O = L-aspartate + NH4(+). This Pseudomonas aeruginosa (strain ATCC 15692 / DSM 22644 / CIP 104116 / JCM 14847 / LMG 12228 / 1C / PRS 101 / PAO1) protein is Glutaminase-asparaginase (ansB).